The following is a 617-amino-acid chain: MALLQIAEPGQSSAPHEHKRAAGIDLGTTNSLVASVRSGTADTLKDAQGRSLLPSIVNYANEEAIVGYEAKALSESQPQDTIISVKRLLGRSLTDIQTRYPSLPYRFKASENGLPVLQTTQGDKNPIEVSADILKVLAKRAEESLGGELSGVVITVPAYFDDAQRAGTKDAAKLAGLHVLRLLNEPTAAAIAYGLDSGQEGVIAVYDLGGGTFDISILRLSKGVFEVLATGGDSALGGDDFDHLLADFLAEQAGLETPLSAEKNRTLLNIATATKIAFSEQDSVEVEVFGWKGVVTREQFEELIRPLVKKTLMSCRRALKDADVEADEVLEVVMVGGSTRTLLVREMVGEFFGRTPLTNINPDEVVAIGAGIQADILAGNKPDSEMLLLDVIPLSLGIETMGGLVEKIIPRNTTIPVARAQEFTTFKDGQTAMSVHIVQGEREMVDDCRSLARFSLKGIPPMAAGAAHIRVTYQVDADGLLSVTAMEKSTGVQSEIQVKPSYGLSDDEVANMLRDSMTYAKEDMQARALAEQRVEADRVIEGLIAAMQADGDELLSEAEKATLLQAIESLIELRNGNEANAIEQGIKDTDKASQDFASRRMDKSIRAALAGQSIDTI.

The protein belongs to the heat shock protein 70 family.

In terms of biological role, probable chaperone. Has a low intrinsic ATPase activity which is markedly stimulated by HscB. This chain is Chaperone protein HscA homolog, found in Vibrio vulnificus (strain CMCP6).